The primary structure comprises 682 residues: DNA ligase (682 aa).

Residues 43-47 (DSEYD), 92-93 (SL), and D123 contribute to the NAD(+) site. Residue K125 is the N6-AMP-lysine intermediate of the active site. R146, E184, K302, and K326 together coordinate NAD(+). C420, C423, C438, and C443 together coordinate Zn(2+). In terms of domain architecture, BRCT spans 603 to 682 (TTKGFFTGKK…TFLQKLLIVL (80 aa)).

The protein belongs to the NAD-dependent DNA ligase family. LigA subfamily. Mg(2+) serves as cofactor. Requires Mn(2+) as cofactor.

It carries out the reaction NAD(+) + (deoxyribonucleotide)n-3'-hydroxyl + 5'-phospho-(deoxyribonucleotide)m = (deoxyribonucleotide)n+m + AMP + beta-nicotinamide D-nucleotide.. Functionally, DNA ligase that catalyzes the formation of phosphodiester linkages between 5'-phosphoryl and 3'-hydroxyl groups in double-stranded DNA using NAD as a coenzyme and as the energy source for the reaction. It is essential for DNA replication and repair of damaged DNA. The protein is DNA ligase of Lawsonia intracellularis (strain PHE/MN1-00).